Reading from the N-terminus, the 893-residue chain is Phosphatidate phosphatase LPIN2 (893 aa).

Residues 1 to 108 are N-LIP; the sequence is MNYVGQLAGQ…LPAYLATSPI (108 aa). A Phosphoserine modification is found at serine 106. Residues 122 to 216 are disordered; the sequence is LVKSSGNERP…EDYKEPSLFH (95 aa). A compositionally biased stretch (polar residues) spans 123–151; the sequence is VKSSGNERPAQSSDVSHTLESEAVFTQSS. The segment covering 152–162 has biased composition (basic residues); the sequence is VKKKKRRRKKC. Residues 153–158 carry the Nuclear localization signal motif; sequence KKKKRR. 3 positions are modified to phosphoserine: serine 174, serine 186, and serine 187. Basic and acidic residues predominate over residues 204–213; that stretch reads LKEEDYKEPS. Phosphoserine is present on residues serine 243 and serine 303. 2 disordered regions span residues 357–400 and 417–456; these read LLDA…PDDI and FPKS…TECL. Over residues 360 to 371 the composition is skewed to low complexity; that stretch reads ADPVPSPSAEAP. Basic residues predominate over residues 384–393; sequence KKKGVHKRSQ. The span at 423–445 shows a compositional bias: polar residues; it reads DPGSRQWPESDTFSGSQSPQSVG. Serine 563 is modified (phosphoserine). A disordered region spans residues 568 to 611; sequence LPETKEGKSEVPPANDLPSNAEEPTSARPAENDTSSDEGSQELE. Over residues 601 to 611 the composition is skewed to acidic residues; it reads TSSDEGSQELE. A C-LIP region spans residues 632–834; it reads YKKSLRLSSD…RIFTVNPKGE (203 aa). The short motif at 686–690 is the DXDXT motif element; that stretch reads DIDGT. The LXXIL motif signature appears at 697-701; that stretch reads LGQIL.

The protein belongs to the lipin family. Mg(2+) serves as cofactor. As to expression, expressed at high level in liver and to some extend in lung, kidney, placenta, spleen, thymus, lymph node, prostate, testes, small intestine, and colon. Expressed also in circulating red blood cells and site of lymphopoiesis.

Its subcellular location is the nucleus. The protein localises to the cytoplasm. The protein resides in the cytosol. It localises to the endoplasmic reticulum membrane. It catalyses the reaction a 1,2-diacyl-sn-glycero-3-phosphate + H2O = a 1,2-diacyl-sn-glycerol + phosphate. With respect to regulation, inhibited by N-ethylmaleimide. In terms of biological role, acts as a magnesium-dependent phosphatidate phosphatase enzyme which catalyzes the conversion of phosphatidic acid to diacylglycerol during triglyceride, phosphatidylcholine and phosphatidylethanolamine biosynthesis in the endoplasmic reticulum membrane. Plays important roles in controlling the metabolism of fatty acids at different levels. Also acts as a nuclear transcriptional coactivator for PPARGC1A to modulate lipid metabolism. The chain is Phosphatidate phosphatase LPIN2 from Mus musculus (Mouse).